A 54-amino-acid polypeptide reads, in one-letter code: uncharacterized protein (54 aa).

Positions 1-38 (MFPNSNGPNKMKALVAPSNSSTTSKTNNNNLPPNGRSS) are disordered. Residues 17 to 38 (PSNSSTTSKTNNNNLPPNGRSS) are compositionally biased toward low complexity.

This is an uncharacterized protein from Dictyostelium discoideum (Social amoeba).